Consider the following 57-residue polypeptide: Phylloseptin-Az4 (57 aa).

Residues 1–13 (LVLFLGLVSLSIC) form the signal peptide. A propeptide spanning residues 14–35 (EEEKRETEEEENDQEEDDKSEE) is cleaved from the precursor. Residues 16–35 (EKRETEEEENDQEEDDKSEE) form a disordered region. The segment covering 21 to 32 (EEEENDQEEDDK) has biased composition (acidic residues). Leu-56 is subject to Leucine amide.

Expressed by the skin glands.

The protein resides in the secreted. Functionally, has antibacterial activity against the Gram-positive bacterium M.luteus ATCC 49732 (MIC=1.3 uM). Does not inhibit the growth of the fungus C.albicans. In Pithecopus azureus (Orange-legged monkey tree frog), this protein is Phylloseptin-Az4 (psn12).